We begin with the raw amino-acid sequence, 75 residues long: Large ribosomal subunit protein bL28 (75 aa).

It belongs to the bacterial ribosomal protein bL28 family.

The sequence is that of Large ribosomal subunit protein bL28 from Buchnera aphidicola subsp. Acyrthosiphon pisum (strain APS) (Acyrthosiphon pisum symbiotic bacterium).